The following is a 1220-amino-acid chain: DNA polymerase catalytic subunit (1220 aa).

Disordered stretches follow at residues 21–43 (GKRP…RPPQ) and 641–691 (QADA…KPGV). The span at 646 to 660 (SETSELAMDSQSHAF) shows a compositional bias: polar residues.

The protein belongs to the DNA polymerase type-B family. In terms of assembly, forms a complex with the ssDNA-binding protein, the DNA polymerase processivity factor, and the alkaline exonuclease. Interacts with the helicase-primase complex composed of the primase, the helicase and the primase-associated factor; this interaction may coordinate leading and lagging strand DNA synthesis at the replication fork.

The protein localises to the host nucleus. The enzyme catalyses DNA(n) + a 2'-deoxyribonucleoside 5'-triphosphate = DNA(n+1) + diphosphate. It carries out the reaction Endonucleolytic cleavage to 5'-phosphomonoester.. Functionally, replicates viral genomic DNA. The replication complex is composed of six viral proteins: the DNA polymerase, processivity factor, primase, primase-associated factor, helicase, and ssDNA-binding protein. Additionally, the polymerase contains an intrinsic ribonuclease H (RNase H) activity that specifically degrades RNA/DNA heteroduplexes or duplex DNA substrates in the 5' to 3' direction. Therefore, it can catalyze the excision of the RNA primers that initiate the synthesis of Okazaki fragments at a replication fork during viral DNA replication. The sequence is that of DNA polymerase catalytic subunit from Equine herpesvirus 1 (strain Ab4p) (EHV-1).